A 101-amino-acid polypeptide reads, in one-letter code: Protein RnfH (101 aa).

Belongs to the UPF0125 (RnfH) family.

This is Protein RnfH from Coxiella burnetii (strain CbuG_Q212) (Coxiella burnetii (strain Q212)).